The primary structure comprises 349 residues: Magnesium-protoporphyrin IX monomethyl ester [oxidative] cyclase (349 aa).

The span at 1-10 (MTATTATAPT) shows a compositional bias: low complexity. Positions 1-23 (MTATTATAPTMRGGGRNELPPHL) are disordered.

The protein belongs to the AcsF family. Requires Fe cation as cofactor.

The enzyme catalyses Mg-protoporphyrin IX 13-monomethyl ester + 3 NADPH + 3 O2 + 2 H(+) = 3,8-divinyl protochlorophyllide a + 3 NADP(+) + 5 H2O. It participates in porphyrin-containing compound metabolism; chlorophyll biosynthesis (light-independent). Functionally, catalyzes the formation of the isocyclic ring in chlorophyll biosynthesis. Mediates the cyclase reaction, which results in the formation of divinylprotochlorophyllide (Pchlide) characteristic of all chlorophylls from magnesium-protoporphyrin IX 13-monomethyl ester (MgPMME). The protein is Magnesium-protoporphyrin IX monomethyl ester [oxidative] cyclase of Prochlorococcus marinus (strain MIT 9313).